Consider the following 284-residue polypeptide: L-ribulose-5-phosphate 3-epimerase UlaE (284 aa).

Belongs to the L-ribulose-5-phosphate 3-epimerase family.

It catalyses the reaction L-ribulose 5-phosphate = L-xylulose 5-phosphate. Its pathway is cofactor degradation; L-ascorbate degradation; D-xylulose 5-phosphate from L-ascorbate: step 3/4. Catalyzes the isomerization of L-xylulose-5-phosphate to L-ribulose-5-phosphate. Is involved in the anaerobic L-ascorbate utilization. The chain is L-ribulose-5-phosphate 3-epimerase UlaE from Salmonella dublin (strain CT_02021853).